The sequence spans 261 residues: SLA class II histocompatibility antigen, DQ haplotype C beta chain (261 aa).

The N-terminal stretch at 1–31 is a signal peptide; the sequence is MSGMVALRLPRGLWTAALTVMLVVLGAPVAE. Positions 32 to 126 are beta-1; that stretch reads GRDSPQDFVF…IEEGTTLQRR (95 aa). Topologically, residues 32 to 230 are extracellular; sequence GRDSPQDFVF…RAQSESAQSK (199 aa). 2 cysteine pairs are disulfide-bonded: cysteine 47–cysteine 111 and cysteine 149–cysteine 205. N-linked (GlcNAc...) asparagine glycosylation is present at asparagine 51. A beta-2 region spans residues 127–220; sequence VQPTVTISPS…SLQNPILVEW (94 aa). The Ig-like C1-type domain occupies 129–233; that stretch reads PTVTISPSKA…SESAQSKMLS (105 aa). The tract at residues 221–230 is connecting peptide; sequence RAQSESAQSK. The chain crosses the membrane as a helical span at residues 231–251; it reads MLSGVGGFVLGLIFLGLGLFI. The Cytoplasmic segment spans residues 252–261; that stretch reads RHRSQKGLVR.

Belongs to the MHC class II family.

It is found in the membrane. In Sus scrofa (Pig), this protein is SLA class II histocompatibility antigen, DQ haplotype C beta chain.